Reading from the N-terminus, the 209-residue chain is Fibroblast growth factor 21 (209 aa).

Positions methionine 1–alanine 28 are cleaved as a signal peptide. The disordered stretch occupies residues proline 143–serine 209. Pro residues predominate over residues proline 168–proline 186.

This sequence belongs to the heparin-binding growth factors family. Interacts (via C-terminus) with KLB; this interaction is direct. Interacts with FGFR4.

It localises to the secreted. Functionally, stimulates glucose uptake in differentiated adipocytes via the induction of glucose transporter SLC2A1/GLUT1 expression (but not SLC2A4/GLUT4 expression). Activity requires the presence of KLB. Regulates systemic glucose homeostasis and insulin sensitivity. This Homo sapiens (Human) protein is Fibroblast growth factor 21 (FGF21).